We begin with the raw amino-acid sequence, 2210 residues long: Filamin-A (2210 aa).

Calponin-homology (CH) domains lie at 15-120 (KIQQ…LHYS) and 139-242 (HTPK…NSKL). Filamin repeat units follow at residues 249–347 (RPKT…PVKV), 349–447 (GHAG…PVKV), 448–544 (APLS…EVKV), 545–635 (GPKK…IAQI), 638–734 (RTDF…RVYV), 735–831 (GVPV…VVVE), 832–929 (QTVD…VVNV), 930–1022 (KSGC…RVLV), 1023–1121 (EETV…VMTV), 1122–1217 (FPKS…KLEA), 1218–1312 (FPTG…SIKA), 1322–1423 (SEYI…KFHV), 1424–1515 (DSIT…FAKI), 1516–1603 (TGEG…KVTV), 1606–1698 (REVG…TVKV), 1699–1796 (AGEG…QFTV), 1799–1891 (LRDS…KVYV), 1893–1986 (PDAG…RIKV), 1988–2079 (KDVA…KVNA), and 2116–2210 (TFKS…QIDV).

It belongs to the filamin family. Interacts with Ten-m. As to expression, germline-specific in females (at protein level). Expressed in ovary.

The protein localises to the cytoplasm. It is found in the cytoskeleton. It localises to the cell membrane. Functionally, involved in the germline ring canal formation. May tether actin microfilament within the ovarian ring canal to the cell membrane. Contributes to actin microfilaments organization. The polypeptide is Filamin-A (cher) (Drosophila melanogaster (Fruit fly)).